Consider the following 499-residue polypeptide: Circadian clock oscillator protein KaiC (499 aa).

KaiC domains follow at residues 1–243 (MQSS…VSVF) and 257–499 (VRIS…DERA). ATP is bound by residues Gly-45, Thr-46, Gly-47, Lys-48, Thr-49, Ser-85, Lys-220, Leu-221, Arg-222, Thr-224, His-226, Thr-286, Gly-287, Thr-288, Gly-289, Lys-290, Thr-291, and Leu-292. Thr-49 contacts Mg(2+). A Mg(2+)-binding site is contributed by Thr-291. Glu-314 provides a ligand contact to Mg(2+). Trp-327 contacts ATP. Ser-427 bears the Phosphoserine; by autocatalysis mark. Residue Thr-428 is modified to Phosphothreonine; by autocatalysis. ATP-binding residues include Arg-447, Lys-453, Met-454, Arg-455, Ser-457, His-459, and Lys-461.

It belongs to the KaiC family. As to quaternary structure, homohexamer; hexamerization is dependent on ATP-binding. Component of the KaiBC complex. KaiC interacts with SasA, activating its autokinase function and leading to RpaA activation. Mg(2+) is required as a cofactor. In terms of processing, phosphorylated on serine and threonine residues by autocatalysis. Has a 4 step phosphorylation cycle; the autokinase acts first on Thr-428, then Ser-427. When Ser-427 is modified KaiC switches to an autophosphatase mode, acting first on phospho-Thr-428 then phospho-Ser-427.

The catalysed reaction is L-seryl-[protein] + ATP = O-phospho-L-seryl-[protein] + ADP + H(+). The enzyme catalyses L-threonyl-[protein] + ATP = O-phospho-L-threonyl-[protein] + ADP + H(+). It catalyses the reaction ATP + H2O = ADP + phosphate + H(+). Its function is as follows. Central component of the KaiBC oscillator complex, which constitutes the main circadian regulator in cyanobacteria. Its composition changes during the circadian cycle to control KaiC phosphorylation. Autophosphorylates and has a weak ATPase activity; ATPase activity defines the circadian period. The sequence is that of Circadian clock oscillator protein KaiC from Prochlorococcus marinus (strain MIT 9313).